Consider the following 118-residue polypeptide: Myotrophin (118 aa).

ANK repeat units lie at residues 1 to 30, 34 to 65, and 67 to 98; these read MGDK…DVNR, GGRK…NAPD, and HGIT…NRKG.

This sequence belongs to the myotrophin family.

The protein resides in the cytoplasm. Its subcellular location is the nucleus. It localises to the perinuclear region. In terms of biological role, regulates NF-kappa-B transcription factor activity. Promotes growth of cardiomyocytes, but not cardiomyocyte proliferation. Promotes cardiac muscle hypertrophy. Plays a role in the regulation of the growth of actin filaments. Inhibits the activity of the F-actin-capping protein complex. In Danio rerio (Zebrafish), this protein is Myotrophin (mtpn).